A 591-amino-acid polypeptide reads, in one-letter code: Cytidine monophosphate-N-acetylneuraminic acid hydroxylase (591 aa).

Residues 16–114 form the Rieske domain; sequence LASAEVESLK…IENDDENGVS (99 aa). [2Fe-2S] cluster is bound by residues Cys-56, His-58, Cys-77, and His-80.

The protein belongs to the CMP-Neu5Ac hydroxylase family. It depends on [2Fe-2S] cluster as a cofactor.

It is found in the cytoplasm. The enzyme catalyses CMP-N-acetyl-beta-neuraminate + 2 Fe(II)-[cytochrome b5] + O2 + 2 H(+) = CMP-N-glycoloyl-beta-neuraminate + 2 Fe(III)-[cytochrome b5] + H2O. The protein operates within amino-sugar metabolism; N-acetylneuraminate metabolism. Its function is as follows. Sialic acids are components of carbohydrate chains of glycoconjugates and are involved in cell-cell recognition and cell-pathogen interactions. Catalyzes the conversion of CMP-N-acetylneuraminic acid (CMP-Neu5Ac) into its hydroxylated derivative CMP-N-glycolylneuraminic acid (CMP-Neu5Gc), a sialic acid abundantly expressed at the surface of many cells. This chain is Cytidine monophosphate-N-acetylneuraminic acid hydroxylase (cmah), found in Xenopus laevis (African clawed frog).